The following is an 876-amino-acid chain: uncharacterized protein (876 aa).

Residues 37-48 show a composition bias toward basic and acidic residues; the sequence is DEDKSNNDDRRS. Disordered regions lie at residues 37–67, 112–155, 226–254, and 330–353; these read DEDK…KGSN, DESG…RNIK, KKKS…TKSQ, and MMMD…SRSI. S48 and S51 each carry phosphoserine. Residues 49-58 are compositionally biased toward low complexity; sequence LASILDSSSS. Residues 115-131 show a composition bias toward polar residues; it reads GFTSDNNADYFSGNSYS. Phosphoserine occurs at positions 360, 510, 552, and 577. The interval 490–513 is disordered; that stretch reads PEVTKQKNTSGPKPGFSHSKSADA. Disordered regions lie at residues 661–728 and 750–876; these read ITGG…RSPQ and RHSL…FGRL. The segment covering 689–699 has biased composition (basic residues); that stretch reads SKSKSRSSSKS. The segment covering 717–726 has biased composition (low complexity); that stretch reads SSASASRSRS. At S775 the chain carries Phosphoserine. Composition is skewed to low complexity over residues 794–808 and 842–854; these read NKDS…SSSL and FSFF…SPSS.

This is an uncharacterized protein from Saccharomyces cerevisiae (strain ATCC 204508 / S288c) (Baker's yeast).